Here is a 134-residue protein sequence, read N- to C-terminus: Histone-like protein Rv3852 (134 aa).

The span at 1 to 10 (MPDPQDRPDS) shows a compositional bias: basic and acidic residues. The segment at 1–68 (MPDPQDRPDS…PAEAPVSLQQ (68 aa)) is disordered. The span at 23-48 (LPAKKAAKKAPARKTPAKKAPAKKTP) shows a compositional bias: basic residues. A helical membrane pass occupies residues 111 to 128 (PVPLIVAVTLSLLALLLI).

In terms of assembly, homodimer in solution. Is probably able to self-associate in higher oligomers along the DNA molecules. Interacts with the N-terminal region of Wag31.

It is found in the cell inner membrane. Can interact directly in vitro with the compound agrimophol, a phloroglucinol from the A.pilosa plant, whose extracts have been used in traditional Chinese medicine to treat pulmonary infections. Interaction with agrimophol leads to disruption of Rv3852's DNA binding function. In terms of biological role, binds DNA in vitro. It has been proposed that Rv3852 plays a role in nucleoid organization and may function as an anchorage to tether the DNA to the membrane. However, it was later shown that it has no influence on nucleoid shape or compaction. It plays no role in virulence and only a minor role in the control of transcription, and does not appear to function as a typical nucleoid-associated protein. Interacts with Wag31, an important cell shape and cell wall integrity determinant, and facilitates the localization of Wag31 to the cell poles and the cell wall, thus enabling nascent peptidoglycan synthesis. This is Histone-like protein Rv3852 from Mycobacterium tuberculosis (strain ATCC 25618 / H37Rv).